Consider the following 41-residue polypeptide: Large ribosomal subunit protein bL36 (41 aa).

This sequence belongs to the bacterial ribosomal protein bL36 family.

The sequence is that of Large ribosomal subunit protein bL36 from Pelagibacter ubique (strain HTCC1062).